Reading from the N-terminus, the 210-residue chain is Na(+)-translocating NADH-quinone reductase subunit D (210 aa).

6 helical membrane-spanning segments follow: residues Ala9 to Cys29, Leu42 to Ile62, Ile72 to Ala92, Ala96 to Gly116, Phe131 to Ile151, and Met178 to Leu198.

Belongs to the NqrDE/RnfAE family. Composed of six subunits; NqrA, NqrB, NqrC, NqrD, NqrE and NqrF.

It localises to the cell inner membrane. It catalyses the reaction a ubiquinone + n Na(+)(in) + NADH + H(+) = a ubiquinol + n Na(+)(out) + NAD(+). Its function is as follows. NQR complex catalyzes the reduction of ubiquinone-1 to ubiquinol by two successive reactions, coupled with the transport of Na(+) ions from the cytoplasm to the periplasm. NqrA to NqrE are probably involved in the second step, the conversion of ubisemiquinone to ubiquinol. This Pseudoalteromonas translucida (strain TAC 125) protein is Na(+)-translocating NADH-quinone reductase subunit D.